A 454-amino-acid polypeptide reads, in one-letter code: tRNA modification GTPase MnmE (454 aa).

3 residues coordinate (6S)-5-formyl-5,6,7,8-tetrahydrofolate: Arg23, Glu80, and Lys120. Residues Gly216–Gly377 form the TrmE-type G domain. Residue Asn226 participates in K(+) binding. GTP-binding positions include Asn226–Ser231, Thr245–Thr251, Asp270–Gly273, Asn335–Asp338, and Ser358–Arg360. Mg(2+) is bound at residue Ser230. Residues Thr245, Ile247, and Thr250 each contribute to the K(+) site. Thr251 lines the Mg(2+) pocket. Lys454 is a binding site for (6S)-5-formyl-5,6,7,8-tetrahydrofolate.

Belongs to the TRAFAC class TrmE-Era-EngA-EngB-Septin-like GTPase superfamily. TrmE GTPase family. Homodimer. Heterotetramer of two MnmE and two MnmG subunits. It depends on K(+) as a cofactor.

Its subcellular location is the cytoplasm. Its function is as follows. Exhibits a very high intrinsic GTPase hydrolysis rate. Involved in the addition of a carboxymethylaminomethyl (cmnm) group at the wobble position (U34) of certain tRNAs, forming tRNA-cmnm(5)s(2)U34. This is tRNA modification GTPase MnmE from Enterobacter sp. (strain 638).